The sequence spans 1028 residues: Contactin-6 (1028 aa).

A signal peptide spans 1–19 (MRLLWKLVILLPLINSCAG). 6 Ig-like C2-type domains span residues 32–117 (PQDV…AKLQ), 122–208 (EDFE…RSVQ), 227–308 (PKIE…RNLA), 318–402 (PEWE…AELR), 408–495 (PDFS…GSLI), and 499–587 (RTVI…ERLS). 6 disulfides stabilise this stretch: C50-C100, C144-C196, C249-C297, C339-C386, C431-C479, and C521-C577. N-linked (GlcNAc...) asparagine glycans are attached at residues N65 and N193. N-linked (GlcNAc...) asparagine glycans are attached at residues N368, N377, and N468. Fibronectin type-III domains lie at 600 to 698 (PPED…TKAS), 703 to 800 (APVN…SGED), 805 to 901 (APRG…TKKS), and 902 to 996 (PPSQ…KMSS). 4 N-linked (GlcNAc...) asparagine glycosylation sites follow: N659, N765, N860, and N865. Y882 carries the phosphotyrosine modification. Polar residues predominate over residues 887-902 (TGPSSPPVNVTTKKSP). The disordered stretch occupies residues 887-908 (TGPSSPPVNVTTKKSPPSQPPA). N-linked (GlcNAc...) asparagine glycosylation is found at N895, N931, N956, and N957. S999 is lipidated: GPI-anchor amidated serine. Residues 1000–1028 (VGVQILKPSTQFLTMVGFFYCFVIQPLSR) constitute a propeptide, removed in mature form.

Belongs to the immunoglobulin superfamily. Contactin family. As to quaternary structure, interacts with PTPRG. In terms of tissue distribution, specifically expressed in neuronal cells. In brain, it is expressed in spinal cord, cerebrum and cerebellum. At 17 dpc, it is expressed in hippocampus, cerebellum, and the brain stem. Strongly expressed after birth with a maximum level between P1 and P21, which corresponds to the time frame of oligodendrogliogenesis.

It localises to the cell membrane. Functionally, contactins mediate cell surface interactions during nervous system development. Participates in oligodendrocytes generation by acting as a ligand of NOTCH1. Its association with NOTCH1 promotes NOTCH1 activation through the released notch intracellular domain (NICD) and subsequent translocation to the nucleus. May be involved in motor coordination. The protein is Contactin-6 (Cntn6) of Rattus norvegicus (Rat).